A 134-amino-acid chain; its full sequence is Profilin-2 (134 aa).

An intrachain disulfide couples cysteine 13 to cysteine 118. The Involved in PIP2 interaction signature appears at 84-100 (AVIRGKKGSGGITIKKT). Threonine 114 carries the post-translational modification Phosphothreonine.

The protein belongs to the profilin family. Occurs in many kinds of cells as a complex with monomeric actin in a 1:1 ratio. In terms of processing, phosphorylated by MAP kinases.

Its subcellular location is the cytoplasm. The protein localises to the cytoskeleton. Its function is as follows. Binds to actin and affects the structure of the cytoskeleton. At high concentrations, profilin prevents the polymerization of actin, whereas it enhances it at low concentrations. This chain is Profilin-2, found in Olea europaea (Common olive).